The chain runs to 895 residues: Ral guanine nucleotide dissociation stimulator (895 aa).

The N-terminal Ras-GEF domain occupies 112–237; sequence KVRTVKAGTL…RAHLLLAQLE (126 aa). The interval 301 to 324 is disordered; sequence SELEPALEPPLDPEPTLAPAPELD. Residues 307–318 show a composition bias toward pro residues; it reads LEPPLDPEPTLA. Residues 367–629 enclose the Ras-GEF domain; sequence PPDLVAEQFT…YNLSCELEPP (263 aa). Disordered regions lie at residues 650–669 and 708–754; these read ERRQ…HSKS and VPES…STTR. Low complexity-rich tracts occupy residues 656–667 and 726–753; these read STELSTSSSAHS and SSPE…VSTT. Residues 779 to 866 form the Ras-associating domain; sequence DCCIIRVSLD…YDFILKKRAF (88 aa). Phosphotyrosine is present on Tyr-795.

As to quaternary structure, interacts with RIT1 and RIT2. Interacts with TRAF3. Interacts with HRAS. Phosphorylation of Tyr-795 by MET blocks HRAS binding. In terms of tissue distribution, expressed in all tissues examined.

Its subcellular location is the cytoplasm. The protein localises to the nucleus. In terms of biological role, functions as a guanine nucleotide exchange factor (GEF) activating either RalA or RalB GTPases and plays an important role in intracellular transport. Interacts and acts as an effector molecule for R-Ras, H-Ras, K-Ras, and Rap. During bacterial clearance, recognizes 'Lys-33'-linked polyubiquitinated TRAF3 and subsequently mediates assembly of the exocyst complex. The chain is Ral guanine nucleotide dissociation stimulator (Ralgds) from Rattus norvegicus (Rat).